A 263-amino-acid polypeptide reads, in one-letter code: Hydroxyethylthiazole kinase 1 (263 aa).

A substrate-binding site is contributed by Met-42. ATP-binding residues include Lys-118 and Thr-164. Gly-191 serves as a coordination point for substrate.

This sequence belongs to the Thz kinase family. Mg(2+) serves as cofactor.

The enzyme catalyses 5-(2-hydroxyethyl)-4-methylthiazole + ATP = 4-methyl-5-(2-phosphooxyethyl)-thiazole + ADP + H(+). Its pathway is cofactor biosynthesis; thiamine diphosphate biosynthesis; 4-methyl-5-(2-phosphoethyl)-thiazole from 5-(2-hydroxyethyl)-4-methylthiazole: step 1/1. In terms of biological role, catalyzes the phosphorylation of the hydroxyl group of 4-methyl-5-beta-hydroxyethylthiazole (THZ). The sequence is that of Hydroxyethylthiazole kinase 1 from Clostridium botulinum (strain Okra / Type B1).